We begin with the raw amino-acid sequence, 135 residues long: MDRTVHSFVERLGIPREDLLLPCTFCSRFLTQEELTAFDFSAFNLVWRGRCAHGICTACARVCASLDLFLHHQNSRPLADVLRDENLTLHGLKARCRVCMKILSVTEKLECAERGESFAKVRGQWRARCRICKPV.

2 zinc fingers span residues 23 to 59 (CTFC…CTAC) and 96 to 132 (CRVC…CRIC).

The protein belongs to the papillomaviridae E6 protein family. Forms homodimers. Interacts with ubiquitin-protein ligase UBE3A/E6-AP; this interaction stimulates UBE3A ubiquitin activity. Interacts with host BAK1.

It localises to the host cytoplasm. The protein resides in the host nucleus. In terms of biological role, plays a major role in the induction and maintenance of cellular transformation. E6 associates with host UBE3A/E6-AP ubiquitin-protein ligase and modulates its activity. Protects host keratinocytes from apoptosis by mediating the degradation of host BAK1. May also inhibit host immune response. This chain is Protein E6, found in Mastomys natalensis papillomavirus (isolate African multimammate rat) (MnPV).